The primary structure comprises 123 residues: Large ribosomal subunit protein uL29 (123 aa).

Belongs to the universal ribosomal protein uL29 family. As to quaternary structure, component of the large ribosomal subunit.

The protein localises to the cytoplasm. Its function is as follows. Component of the large ribosomal subunit. The ribosome is a large ribonucleoprotein complex responsible for the synthesis of proteins in the cell. This is Large ribosomal subunit protein uL29 (rpl35) from Hippocampus comes (Tiger tail seahorse).